The following is a 290-amino-acid chain: Protease HtpX (290 aa).

Helical transmembrane passes span 4-24 (IMLFLATNLAVLIIASITLKL) and 36-56 (GSLLIFCAVFGFAGSLVSLFI). Zn(2+) is bound at residue H142. E143 is an active-site residue. H146 is a binding site for Zn(2+). 2 helical membrane-spanning segments follow: residues 150-170 (GDMVTLALIQGVVNTFVMFFA) and 193-213 (FIATIFAELVLGILASIIVMW). E219 contacts Zn(2+).

Belongs to the peptidase M48B family. Requires Zn(2+) as cofactor.

Its subcellular location is the cell inner membrane. In Ectopseudomonas mendocina (strain ymp) (Pseudomonas mendocina), this protein is Protease HtpX.